A 357-amino-acid polypeptide reads, in one-letter code: DNA replication and repair protein RecF (357 aa).

ATP is bound at residue 30–37; that stretch reads GANGSGKT.

The protein belongs to the RecF family.

It localises to the cytoplasm. The RecF protein is involved in DNA metabolism; it is required for DNA replication and normal SOS inducibility. RecF binds preferentially to single-stranded, linear DNA. It also seems to bind ATP. The sequence is that of DNA replication and repair protein RecF from Salmonella paratyphi B (strain ATCC BAA-1250 / SPB7).